The sequence spans 115 residues: NAD(P)H-quinone oxidoreductase subunit M (115 aa).

This sequence belongs to the complex I NdhM subunit family. As to quaternary structure, NDH-1 can be composed of about 15 different subunits; different subcomplexes with different compositions have been identified which probably have different functions.

The protein resides in the cellular thylakoid membrane. It catalyses the reaction a plastoquinone + NADH + (n+1) H(+)(in) = a plastoquinol + NAD(+) + n H(+)(out). It carries out the reaction a plastoquinone + NADPH + (n+1) H(+)(in) = a plastoquinol + NADP(+) + n H(+)(out). NDH-1 shuttles electrons from an unknown electron donor, via FMN and iron-sulfur (Fe-S) centers, to quinones in the respiratory and/or the photosynthetic chain. The immediate electron acceptor for the enzyme in this species is believed to be plastoquinone. Couples the redox reaction to proton translocation, and thus conserves the redox energy in a proton gradient. Cyanobacterial NDH-1 also plays a role in inorganic carbon-concentration. The polypeptide is NAD(P)H-quinone oxidoreductase subunit M (Prochlorococcus marinus (strain MIT 9515)).